The following is a 214-amino-acid chain: MGLAIAVGSFLISPFSKVIPDPVVDINPVSTTARGTEKAVFAGGCFWGLEAMFEEVRGVKDVQTGYSGGTEATANYARVSGGGTDHAESIEIVYDPAQVSYGELLKIFFSVGHDPTQVNRQGVDQGRQYRSAIFATTPEQKQVAQAYIDQLEESQAFDQAIATEVNDFDAFYPAEDYHQDFVQRNPAHPYVLVHDLPKLRKFRQQYSDKLKAQS.

Cys45 is an active-site residue.

Belongs to the MsrA Met sulfoxide reductase family.

The enzyme catalyses L-methionyl-[protein] + [thioredoxin]-disulfide + H2O = L-methionyl-(S)-S-oxide-[protein] + [thioredoxin]-dithiol. The catalysed reaction is [thioredoxin]-disulfide + L-methionine + H2O = L-methionine (S)-S-oxide + [thioredoxin]-dithiol. In terms of biological role, has an important function as a repair enzyme for proteins that have been inactivated by oxidation. Catalyzes the reversible oxidation-reduction of methionine sulfoxide in proteins to methionine. The polypeptide is Peptide methionine sulfoxide reductase MsrA 2 (msrA2) (Synechocystis sp. (strain ATCC 27184 / PCC 6803 / Kazusa)).